The following is a 368-amino-acid chain: DNA-dependent metalloprotease dvc-1 (368 aa).

The SprT-like domain occupies 21-190; sequence HALFIQFDAR…QSCGGNFLKV (170 aa). Histidine 89 contributes to the Zn(2+) binding site. Glutamate 90 is a catalytic residue. Zn(2+)-binding residues include histidine 93 and histidine 108. A disordered region spans residues 187 to 309; it reads FLKVKEPEGY…PVNFTSPSSA (123 aa). The span at 226 to 237 shows a compositional bias: basic and acidic residues; it reads TLDDFFKKDGKN. Residues 238–274 show a composition bias toward low complexity; sequence SSDNSTSKSPTKPSTSLFTGSGQKLGGSSSTSSLLNS. Residues 344–368 form a UBZ4-type zinc finger; that stretch reads SVICPSCNTEVMENLIHGHLDYCLG. 4 residues coordinate Zn(2+): cysteine 347, cysteine 350, histidine 362, and cysteine 366.

This sequence belongs to the Spartan family. As to quaternary structure, interacts with vcp/p97 (cdc-48.1 or cdc-48.2).

The protein resides in the nucleus. It is found in the chromosome. Its function is as follows. DNA-dependent metalloendopeptidase that mediates the proteolytic cleavage of covalent DNA-protein cross-links (DPCs) during DNA synthesis, thereby playing a key role in maintaining genomic integrity. DPCs are highly toxic DNA lesions that interfere with essential chromatin transactions, such as replication and transcription, and which are induced by reactive agents, such as UV light or formaldehyde. Associates with the DNA replication machinery and specifically removes DPCs during DNA synthesis. Regulator of UV-induced DNA damage response: required to protect genome stability during DNA replication, possibly via recruitment of vcp/p97 (cdc-48.1 or cdc-48.2) recruitment. This chain is DNA-dependent metalloprotease dvc-1, found in Caenorhabditis elegans.